Consider the following 509-residue polypeptide: Maturase K (509 aa).

The protein belongs to the intron maturase 2 family. MatK subfamily.

The protein resides in the plastid. It localises to the chloroplast. Its function is as follows. Usually encoded in the trnK tRNA gene intron. Probably assists in splicing its own and other chloroplast group II introns. The sequence is that of Maturase K from Banksia cuneata (Quairading banksia).